An 80-amino-acid polypeptide reads, in one-letter code: Small ribosomal subunit protein bS16 (80 aa).

It belongs to the bacterial ribosomal protein bS16 family.

The polypeptide is Small ribosomal subunit protein bS16 (Blochmanniella pennsylvanica (strain BPEN)).